The primary structure comprises 178 residues: GGVGKSALTIQLIQNHFVDEYDPTIEDSYRQQVVIDGETCLLDILDTAGQEEYSAMRDQYMRTGEGFLLVFAVNNAKSFEDISAYREQIKRVKDAEEVPMVLVGNKCDLPTRAVDMSQAREVARQYGIPFVETSAKTRMGVDDGFYTLVREIKKDKMKKGNSSRRGRSGRKQLKCSIL.

1-6 contributes to the GTP binding site; the sequence is GGVGKS. The short motif at 21–29 is the Effector region element; that stretch reads YDPTIEDSY. GTP-binding positions include 46–50 and 105–108; these read DTAGQ and NKCD. The residue at position 175 (Cys175) is a Cysteine methyl ester. Cys175 is lipidated: S-geranylgeranyl cysteine. Residues 176–178 constitute a propeptide, removed in mature form; sequence SIL.

Belongs to the small GTPase superfamily. Ras family.

It localises to the cell membrane. It carries out the reaction GTP + H2O = GDP + phosphate + H(+). Alternates between an inactive form bound to GDP and an active form bound to GTP. Activated by a guanine nucleotide-exchange factor (GEF) and inactivated by a GTPase-activating protein (GAP). Ras proteins bind GDP/GTP and possess intrinsic GTPase activity. This Artemia salina (Brine shrimp) protein is Ras-like protein.